Consider the following 329-residue polypeptide: 7,8-didemethyl-8-hydroxy-5-deazariboflavin synthase (329 aa).

Residues 6 to 244 form the Radical SAM core domain; it reads ITYTKNVFLP…EEISIQVAPN (239 aa). 3 residues coordinate [4Fe-4S] cluster: C20, C24, and C27.

The protein belongs to the radical SAM superfamily. CofG family. As to quaternary structure, consists of two subunits, CofG and CofH. It depends on [4Fe-4S] cluster as a cofactor.

It catalyses the reaction 5-amino-5-(4-hydroxybenzyl)-6-(D-ribitylimino)-5,6-dihydrouracil + S-adenosyl-L-methionine = 7,8-didemethyl-8-hydroxy-5-deazariboflavin + 5'-deoxyadenosine + L-methionine + NH4(+) + H(+). It participates in cofactor biosynthesis; coenzyme F0 biosynthesis. Its function is as follows. Catalyzes the radical-mediated synthesis of 7,8-didemethyl-8-hydroxy-5-deazariboflavin from 5-amino-5-(4-hydroxybenzyl)-6-(D-ribitylimino)-5,6-dihydrouracil. This is 7,8-didemethyl-8-hydroxy-5-deazariboflavin synthase from Methanoregula boonei (strain DSM 21154 / JCM 14090 / 6A8).